The chain runs to 230 residues: Secretory carrier-associated membrane protein 4 (230 aa).

Residues 1 to 39 (MAGKENNFPPLPPFLPLKPCFYQDFSDEIPVEHQVLVKR) are Cytoplasmic-facing. 4 helical membrane-spanning segments follow: residues 40-60 (IYRL…ACLA), 61-81 (WWIA…LVLF), 106-126 (MTFF…AIGF), and 149-169 (VVML…AVTI). At 170 to 230 (VKVHRIYRGA…SYSSSGGHWP (61 aa)) the chain is on the cytoplasmic side. Threonine 194 bears the Phosphothreonine mark.

This sequence belongs to the SCAMP family.

Its subcellular location is the membrane. Functionally, probably involved in membrane protein trafficking. This Mus musculus (Mouse) protein is Secretory carrier-associated membrane protein 4 (Scamp4).